A 487-amino-acid polypeptide reads, in one-letter code: 3-octaprenyl-4-hydroxybenzoate carboxy-lyase (487 aa).

N172 contributes to the Mn(2+) binding site. Residues 175 to 177, 189 to 191, and 194 to 195 contribute to the prenylated FMN site; these read IYR, RWL, and RG. E238 is a binding site for Mn(2+). Catalysis depends on D287, which acts as the Proton donor.

Belongs to the UbiD family. As to quaternary structure, homohexamer. Prenylated FMN serves as cofactor. The cofactor is Mn(2+).

It is found in the cell membrane. The catalysed reaction is a 4-hydroxy-3-(all-trans-polyprenyl)benzoate + H(+) = a 2-(all-trans-polyprenyl)phenol + CO2. It participates in cofactor biosynthesis; ubiquinone biosynthesis. Catalyzes the decarboxylation of 3-octaprenyl-4-hydroxy benzoate to 2-octaprenylphenol, an intermediate step in ubiquinone biosynthesis. The sequence is that of 3-octaprenyl-4-hydroxybenzoate carboxy-lyase from Blochmanniella pennsylvanica (strain BPEN).